The following is a 342-amino-acid chain: UDP-N-acetylenolpyruvoylglucosamine reductase (342 aa).

Residues 17 to 192 (RFEAAARYAA…AEVTFALPVD (176 aa)) enclose the FAD-binding PCMH-type domain. Arg-168 is a catalytic residue. The active-site Proton donor is the Ser-242. The active site involves Glu-338.

It belongs to the MurB family. FAD is required as a cofactor.

The protein resides in the cytoplasm. It carries out the reaction UDP-N-acetyl-alpha-D-muramate + NADP(+) = UDP-N-acetyl-3-O-(1-carboxyvinyl)-alpha-D-glucosamine + NADPH + H(+). It functions in the pathway cell wall biogenesis; peptidoglycan biosynthesis. Cell wall formation. This Ralstonia nicotianae (strain ATCC BAA-1114 / GMI1000) (Ralstonia solanacearum) protein is UDP-N-acetylenolpyruvoylglucosamine reductase.